Here is a 167-residue protein sequence, read N- to C-terminus: Translationally-controlled tumor protein homolog (167 aa).

In terms of domain architecture, TCTP spans 1–167 (MKLFTDIISN…WKDGLRETKI (167 aa)).

It belongs to the TCTP family.

Its subcellular location is the cytoplasm. It is found in the cytoskeleton. Involved in protein synthesis. Involved in microtubule stabilization. The protein is Translationally-controlled tumor protein homolog of Mycosarcoma maydis (Corn smut fungus).